An 871-amino-acid polypeptide reads, in one-letter code: Phosphoinositide 3-kinase regulatory subunit 5 (871 aa).

At M1 the chain carries N-acetylmethionine. The interval 25–101 is heterodimerization; the sequence is SLGRRSAPWS…TPHFPPDSDL (77 aa). The tract at residues 381-413 is disordered; that stretch reads MDSGYVEDSEENSEWPQKPGSQKRQGHRRPGQK. Residues S451 and S500 each carry the phosphoserine modification. The tract at residues 646–746 is interaction with beta-gamma G protein dimers; that stretch reads PILADMLLYY…WSNLEKVCTS (101 aa).

As to quaternary structure, heterodimer of a catalytic subunit (PIK3CG/p120) and a regulatory (PIK3R5a/p101) subunit. Interacts with beta-gamma G protein dimers.

It is found in the nucleus. The protein resides in the cytoplasm. Its subcellular location is the cell membrane. With respect to regulation, greatly activated by G gamma proteins. In terms of biological role, regulatory subunit of the PI3K gamma complex. Required for recruitment of the catalytic subunit to the plasma membrane via interaction with beta-gamma G protein dimers. Required for G protein-mediated activation of PIK3CG. This Mus musculus (Mouse) protein is Phosphoinositide 3-kinase regulatory subunit 5 (Pik3r5).